An 84-amino-acid chain; its full sequence is Cell division topological specificity factor (84 aa).

Belongs to the MinE family.

Prevents the cell division inhibition by proteins MinC and MinD at internal division sites while permitting inhibition at polar sites. This ensures cell division at the proper site by restricting the formation of a division septum at the midpoint of the long axis of the cell. This is Cell division topological specificity factor from Pseudomonas fluorescens (strain SBW25).